We begin with the raw amino-acid sequence, 1744 residues long: Complement C4-A (1744 aa).

An N-terminal signal peptide occupies residues 1 to 19 (MRLLWGLIWASSFFTLSLQ). Residues Cys-68 and Cys-97 are joined by a disulfide bond. Asn-226 carries an N-linked (GlcNAc...) asparagine glycan. An intrachain disulfide couples Cys-635 to Cys-669. Residues 676–679 (RKKR) constitute a propeptide that is removed on maturation. Cystine bridges form between Cys-702–Cys-728, Cys-703–Cys-735, and Cys-716–Cys-736. In terms of domain architecture, Anaphylatoxin-like spans 702 to 736 (CCQDGVTRLPMMRSCEQRAARVQQPDCREPFLSCC). The N-linked (GlcNAc...) asparagine glycan is linked to Asn-862. Ser-918 is modified (phosphoserine; by FAM20C). A cross-link (isoglutamyl cysteine thioester (Cys-Gln)) is located at residues 1010–1013 (CGEQ). A glycan (O-linked (GalNAc...) threonine) is linked at Thr-1244. Residue Asn-1328 is glycosylated (N-linked (GlcNAc...) (complex) asparagine). A glycan (N-linked (GlcNAc...) asparagine) is linked at Asn-1391. Sulfotyrosine is present on residues Tyr-1417, Tyr-1420, and Tyr-1422. Positions 1447–1453 (RRNRRRR) are excised as a propeptide. Intrachain disulfides connect Cys-1471/Cys-1535, Cys-1583/Cys-1588, Cys-1595/Cys-1673, Cys-1618/Cys-1742, and Cys-1718/Cys-1727. An NTR domain is found at 1595–1742 (CPRQRRALER…FLQEYGTQGC (148 aa)).

As to quaternary structure, complement circulates in blood as a disulfide-linked trimer of an alpha, beta and gamma chain. Complement C4b is composed of complement C4b-A, complement C4 beta and complement C4 gamma chains that are associated via disulfide bonds. Non-enzymatic component of the C3 convertase, also named C4bC2b, composed of the serine protease complement C2b (C2), as well as complement C4b. Non-enzymatic component of the C5 convertase, also named C4bC2bC3b, composed of the serine protease complement C2b (C2), complement C3b, as well as complement C4b. Post-translationally, prior to secretion, the single-chain precursor is enzymatically cleaved by plasminogen (PLG) to yield non-identical chains alpha, beta and gamma. During activation of the complement systems, the alpha chain is cleaved into C4a and C4b by different proteases depending on the complement pathway: C4b stays linked to the beta and gamma chains, while C4a is released in the plasma. The alpha chain is cleaved by C1S to generate C4a and C4b following activation by the classical complement system. The alpha chain is cleaved to generate C4a and C4b by MASP2 following activation by the lectin complement system. The alpha chain is cleaved by GZMK to generate C4a and C4b following activation by the GZMK complement system. Further degradation of C4b by C1 into the inactive fragments C4c and C4d blocks the generation of C3 convertase. The proteolytic cleavages often are incomplete so that many structural forms can be found in plasma. Upon activation, the internal thioester bond reacts with carbohydrate antigens on the target surface to form amide or ester bonds, leading to covalent association with the surface of pathogens. In terms of processing, ser-1236 of complement C4b interacts with complement C3b via a thioester linkage. Post-translationally, N- and O-glycosylated. O-glycosylated with a core 1 or possibly core 8 glycan. In terms of tissue distribution, complement component C4 is expressed at highest levels in the liver, at moderate levels in the adrenal cortex, adrenal medulla, thyroid gland, and the kidney, and at lowest levels in the heart, ovary, small intestine, thymus, pancreas and spleen. The extra-hepatic sites of expression may be important for the local protection and inflammatory response.

The protein resides in the secreted. It localises to the synapse. The protein localises to the cell projection. It is found in the axon. Its subcellular location is the dendrite. The protein resides in the cell surface. Specifically inhibited by nanobody hC4Nb8, inhibiting the classical complement pathway. Specifically inhibited by NbB5, NbE11 and NbH9 nanobodies, and to a lesser extent by NbH11 and NbE3 nanobodies. Its function is as follows. Precursor of non-enzymatic components of the classical, lectin and GZMK complement pathways, which consist in a cascade of proteins that leads to phagocytosis and breakdown of pathogens and signaling that strengthens the adaptive immune system. Non-enzymatic component of C3 and C5 convertases. Generated following cleavage by complement proteases (C1S, MASP2 or GZMK, depending on the complement pathway), it covalently attaches to the surface of pathogens, where it acts as an opsonin that marks the surface of antigens for removal. It then recruits the serine protease complement C2b to form the C3 and C5 convertases, which cleave and activate C3 and C5, respectively, the next components of the complement pathways. Complement C4b-A isotype is responsible for effective binding to form amide bonds with immune aggregates or protein antigens, while complement C4b-B isotype catalyzes the transacylation of the thioester carbonyl group to form ester bonds with carbohydrate antigens. Functionally, putative humoral mediator released following cleavage by complement proteases (C1S, MASP2 or GZMK, depending on the complement pathway). While it is strongly similar to anaphylatoxins, its role is unclear. Was reported to act as a mediator of local inflammatory process; however these effects were probably due to contamination with C3a and/C5a anaphylatoxins in biological assays. The chain is Complement C4-A from Homo sapiens (Human).